The following is a 254-amino-acid chain: DNA repair protein RecO (254 aa).

The protein belongs to the RecO family.

Its function is as follows. Involved in DNA repair and RecF pathway recombination. In Anaeromyxobacter sp. (strain K), this protein is DNA repair protein RecO.